The sequence spans 73 residues: Small ribosomal subunit protein bS21 (73 aa).

This sequence belongs to the bacterial ribosomal protein bS21 family.

This Parvibaculum lavamentivorans (strain DS-1 / DSM 13023 / NCIMB 13966) protein is Small ribosomal subunit protein bS21.